The primary structure comprises 188 residues: Guanylate kinase (188 aa).

The Guanylate kinase-like domain occupies arginine 4–arginine 183. ATP is bound at residue alanine 11–threonine 18.

The protein belongs to the guanylate kinase family.

The protein resides in the cytoplasm. It carries out the reaction GMP + ATP = GDP + ADP. In terms of biological role, essential for recycling GMP and indirectly, cGMP. This is Guanylate kinase from Salinibacter ruber (strain DSM 13855 / M31).